Consider the following 277-residue polypeptide: Zinc transporter ZupT (277 aa).

The next 8 helical transmembrane spans lie at 7 to 27 (VLLAFGLTLFAGLATGVGSAI), 38 to 58 (FLAVALGFSAGVMIYVSFVEI), 73 to 93 (VLASWYTVAAFFSGALLIAVI), 133 to 155 (AGVLAAVAIGIHNFPEGLAAFSA), 165 to 187 (AIAVAIAIHNIPEGMAVSVPIYY), 196 to 216 (FLYSFLSGVSEPIGALVGYVV), 220 to 240 (FFTPMVFGLLFASVAGIMVYI), and 257 to 277 (LCILGVFSGMGVMALSLLLFL). Positions 145 and 148 each coordinate Fe(2+). E148 and H173 together coordinate Zn(2+). Positions 174, 177, and 206 each coordinate Fe(2+). E177 provides a ligand contact to Zn(2+).

This sequence belongs to the ZIP transporter (TC 2.A.5) family. ZupT subfamily.

It localises to the cell inner membrane. The enzyme catalyses Zn(2+)(in) = Zn(2+)(out). Mediates zinc uptake. May also transport other divalent cations. In Nitratidesulfovibrio vulgaris (strain ATCC 29579 / DSM 644 / CCUG 34227 / NCIMB 8303 / VKM B-1760 / Hildenborough) (Desulfovibrio vulgaris), this protein is Zinc transporter ZupT.